The sequence spans 330 residues: Cyclin N-terminal domain-containing protein 1 (330 aa).

Residues 27 to 178 (DALLHLAQQN…VLKSLNFRIN (152 aa)) enclose the Cyclin N-terminal domain.

Interacts with PRR19; this interaction promotes crossover formation. Interacts with RFC3 and RFC4; these interactions facilitate crossover formation. Interacts with CDC34; this interaction regulates the cell-cycle progression.

It is found in the nucleus. It localises to the cytoplasm. The protein localises to the chromosome. Plays a role in the different steps of crossover formation during meiotic recombination. Participates in the crossover differentiation step of crossover-specific recombination intermediates through its interaction with PRR19. In addition, stimulates crossover formation through the interactions with RFC3 and RFC4 and simultaneously regulates cell-cycle progression through interactions with CDC34 and subsequent ubiquitination of WEE1. May also participates in an active deselection process that destabilizes or removes excess pre-CO intermediates. The protein is Cyclin N-terminal domain-containing protein 1 of Homo sapiens (Human).